We begin with the raw amino-acid sequence, 257 residues long: Succinate dehydrogenase subunit 5, mitochondrial (257 aa).

The N-terminal 89 residues, 1-89 (MGTLGRAIHT…AMGMGQVRRF (89 aa)), are a transit peptide targeting the mitochondrion.

In terms of assembly, component of complex II composed of eight subunits in plants: four classical SDH subunits SDH1, SDH2, SDH3 and SDH4 (a flavoprotein (FP), an iron-sulfur protein (IP), and a cytochrome b composed of a large and a small subunit.), as well as four subunits unknown in mitochondria from bacteria and heterotrophic eukaryotes.

It is found in the mitochondrion inner membrane. It participates in carbohydrate metabolism; tricarboxylic acid cycle. This is Succinate dehydrogenase subunit 5, mitochondrial from Arabidopsis thaliana (Mouse-ear cress).